Consider the following 71-residue polypeptide: MSKDDLIQFTGTVLELLPNATFRVKLENDHVIIAHTSGRMRKNRIRILLGDKVTVEMTPYDLTKGRVIHRH.

One can recognise an S1-like domain in the interval 1-71 (MSKDDLIQFT…LTKGRVIHRH (71 aa)).

This sequence belongs to the IF-1 family. Component of the 30S ribosomal translation pre-initiation complex which assembles on the 30S ribosome in the order IF-2 and IF-3, IF-1 and N-formylmethionyl-tRNA(fMet); mRNA recruitment can occur at any time during PIC assembly.

It is found in the cytoplasm. One of the essential components for the initiation of protein synthesis. Stabilizes the binding of IF-2 and IF-3 on the 30S subunit to which N-formylmethionyl-tRNA(fMet) subsequently binds. Helps modulate mRNA selection, yielding the 30S pre-initiation complex (PIC). Upon addition of the 50S ribosomal subunit IF-1, IF-2 and IF-3 are released leaving the mature 70S translation initiation complex. The protein is Translation initiation factor IF-1 of Rickettsia typhi (strain ATCC VR-144 / Wilmington).